The chain runs to 59 residues: Large ribosomal subunit protein uL30 (59 aa).

This sequence belongs to the universal ribosomal protein uL30 family. In terms of assembly, part of the 50S ribosomal subunit.

This Geobacter metallireducens (strain ATCC 53774 / DSM 7210 / GS-15) protein is Large ribosomal subunit protein uL30.